A 514-amino-acid chain; its full sequence is MTKKIYIFDTTLRDGEQTPKVSLNINDKITIAKQLQKLSVDVIEAGFPKASHGDFEAVKAIAESIQGPVIVGLARASKEDIDCAWEALKGSLKPRIHIFLATSDIHMEHKLKMKPEEVLKRAADMVRYAKGLCPSIEFSPEDATRTRPEFLYKVLEAVIEAGADVVNIPDTVGYTTPVEYGAFIRGIKENVKNIEDAIISVHCHNDLGLAVANSLAAIESGAEQVECAINGLGERAGNAALEEIVMAISTRADSFNCHTDIVTEEITKTSSIVSHVTGMQVQGNKAIVGANAFAHESGIHQHGVLNCRETYEIMTPESVGLKKNFIVLGKHSGRHAFVEHLHEMGYKDLSVEKTDEIFKKFKELADKKKHISDEDIESLVKNEIFHVPEVFKLKYYQVFTGNTVVSTSTVEIECNGKKLSEASCGDGPVDATFKAIEKATGIDVTLNDYFIKAVGSGKDAMGEVTVRIEKEGKIFSAKGISTDIVEASGIAFINAVNKLYYETYSKDLQKISAN.

The Pyruvate carboxyltransferase domain occupies 5-267; the sequence is IYIFDTTLRD…HTDIVTEEIT (263 aa). Residues aspartate 14, histidine 202, histidine 204, and asparagine 238 each coordinate Mn(2+). The tract at residues 392 to 514 is regulatory domain; sequence KLKYYQVFTG…SKDLQKISAN (123 aa).

The protein belongs to the alpha-IPM synthase/homocitrate synthase family. LeuA type 1 subfamily. In terms of assembly, homodimer. Mn(2+) is required as a cofactor.

The protein resides in the cytoplasm. The enzyme catalyses 3-methyl-2-oxobutanoate + acetyl-CoA + H2O = (2S)-2-isopropylmalate + CoA + H(+). It functions in the pathway amino-acid biosynthesis; L-leucine biosynthesis; L-leucine from 3-methyl-2-oxobutanoate: step 1/4. In terms of biological role, catalyzes the condensation of the acetyl group of acetyl-CoA with 3-methyl-2-oxobutanoate (2-ketoisovalerate) to form 3-carboxy-3-hydroxy-4-methylpentanoate (2-isopropylmalate). This is 2-isopropylmalate synthase from Clostridium kluyveri (strain NBRC 12016).